A 335-amino-acid polypeptide reads, in one-letter code: Ketol-acid reductoisomerase (NADP(+)) (335 aa).

One can recognise a KARI N-terminal Rossmann domain in the interval 2–182 (AKIIYDNETT…GATRAGVYET (181 aa)). Residues 25–28 (YGSQ), arginine 48, serine 51, serine 53, and 83–86 (DENQ) each bind NADP(+). Histidine 108 is a catalytic residue. Residue glycine 134 participates in NADP(+) binding. The KARI C-terminal knotted domain maps to 183–328 (TFREETETDL…KQIRANIPWL (146 aa)). Mg(2+)-binding residues include aspartate 191, glutamate 195, glutamate 227, and glutamate 231. Serine 252 is a binding site for substrate.

It belongs to the ketol-acid reductoisomerase family. It depends on Mg(2+) as a cofactor.

The enzyme catalyses (2R)-2,3-dihydroxy-3-methylbutanoate + NADP(+) = (2S)-2-acetolactate + NADPH + H(+). It carries out the reaction (2R,3R)-2,3-dihydroxy-3-methylpentanoate + NADP(+) = (S)-2-ethyl-2-hydroxy-3-oxobutanoate + NADPH + H(+). It functions in the pathway amino-acid biosynthesis; L-isoleucine biosynthesis; L-isoleucine from 2-oxobutanoate: step 2/4. It participates in amino-acid biosynthesis; L-valine biosynthesis; L-valine from pyruvate: step 2/4. Functionally, involved in the biosynthesis of branched-chain amino acids (BCAA). Catalyzes an alkyl-migration followed by a ketol-acid reduction of (S)-2-acetolactate (S2AL) to yield (R)-2,3-dihydroxy-isovalerate. In the isomerase reaction, S2AL is rearranged via a Mg-dependent methyl migration to produce 3-hydroxy-3-methyl-2-ketobutyrate (HMKB). In the reductase reaction, this 2-ketoacid undergoes a metal-dependent reduction by NADPH to yield (R)-2,3-dihydroxy-isovalerate. This chain is Ketol-acid reductoisomerase (NADP(+)), found in Methanosarcina barkeri (strain Fusaro / DSM 804).